A 239-amino-acid chain; its full sequence is 1-(5-phosphoribosyl)-5-[(5-phosphoribosylamino)methylideneamino] imidazole-4-carboxamide isomerase (239 aa).

Aspartate 9 functions as the Proton acceptor in the catalytic mechanism. The Proton donor role is filled by aspartate 131.

This sequence belongs to the HisA/HisF family.

It localises to the cytoplasm. It catalyses the reaction 1-(5-phospho-beta-D-ribosyl)-5-[(5-phospho-beta-D-ribosylamino)methylideneamino]imidazole-4-carboxamide = 5-[(5-phospho-1-deoxy-D-ribulos-1-ylimino)methylamino]-1-(5-phospho-beta-D-ribosyl)imidazole-4-carboxamide. The protein operates within amino-acid biosynthesis; L-histidine biosynthesis; L-histidine from 5-phospho-alpha-D-ribose 1-diphosphate: step 4/9. The chain is 1-(5-phosphoribosyl)-5-[(5-phosphoribosylamino)methylideneamino] imidazole-4-carboxamide isomerase from Bacteroides thetaiotaomicron (strain ATCC 29148 / DSM 2079 / JCM 5827 / CCUG 10774 / NCTC 10582 / VPI-5482 / E50).